A 265-amino-acid chain; its full sequence is ClpXP adapter protein SpxH (265 aa).

It belongs to the SpxH family. Interacts with Spx.

Its subcellular location is the cytoplasm. Functionally, adapter protein required for efficient degradation of Spx by ClpXP under non-stress conditions. Interaction with Spx stabilizes Spx and exposes the C-terminus of Spx for recognition and proteolysis by ClpXP. This is ClpXP adapter protein SpxH from Staphylococcus epidermidis (strain ATCC 35984 / DSM 28319 / BCRC 17069 / CCUG 31568 / BM 3577 / RP62A).